The following is a 276-amino-acid chain: Checkpoint protein HUS1B (276 aa).

It belongs to the HUS1 family. Interacts with RAD1 and RAD9B.

This Mus musculus (Mouse) protein is Checkpoint protein HUS1B (Hus1b).